Consider the following 1268-residue polypeptide: SR-related and CTD-associated factor 8 (1268 aa).

Residues 1–139 enclose the CID domain; sequence MEAVKTFNSE…PLLDMAAGIP (139 aa). Thr-6 is subject to Phosphothreonine. Residue Lys-18 forms a Glycyl lysine isopeptide (Lys-Gly) (interchain with G-Cter in SUMO1) linkage. Ser-273 is subject to Phosphoserine. Disordered regions lie at residues 322–355 and 385–469; these read QQQP…QQHF and EIFE…PVRS. A compositionally biased stretch (polar residues) spans 342 to 354; the sequence is HSASPSQGSSQQH. Basic residues predominate over residues 394 to 443; it reads VAVRSRSRTHSRSRSRSPRKRRSRSRSGSRKRKHRKRSRSRSRERKRKSS. The segment covering 447–461 has biased composition (basic and acidic residues); sequence SSERRAREREKERQK. An RRM domain is found at 477 to 551; the sequence is TTLWVGQVDK…KVIKIAWALN (75 aa). Thr-615 is modified (phosphothreonine). Ser-617 is modified (phosphoserine). Positions 753-808 are disordered; sequence AGNVFNPPSKAEPEEKVPHLTEHQIPSGENTRPVIPSDIPSSAPMLAQPPGASNTS. Residues 763–774 are compositionally biased toward basic and acidic residues; sequence AEPEEKVPHLTE. Asymmetric dimethylarginine is present on residues Arg-915, Arg-925, and Arg-936. Positions 947 to 1063 are disordered; it reads QRGIPPPSVL…GRDHFGRPPV (117 aa). Residues 961-970 show a composition bias toward pro residues; the sequence is HPPPRGPFPP. Composition is skewed to basic and acidic residues over residues 1009–1025 and 1032–1063; these read EGDR…REGI and DVRD…RPPV. The residue at position 1071 (Arg-1071) is an Asymmetric dimethylarginine. Positions 1199-1268 are disordered; it reads ATSQRKGENV…VVESTETEGT (70 aa). Over residues 1249–1262 the composition is skewed to low complexity; sequence GTAAGVESEAVVES.

In terms of assembly, interacts with POLR2A; via C-terminal heptapeptide repeat domain (CTD) phosphorylated at 'Ser-2' and 'Ser-5'. Identified in a complex with CDC5L and other spliceosomal proteins.

It is found in the nucleus. Its subcellular location is the nucleus matrix. Functionally, anti-terminator protein required to prevent early mRNA termination during transcription. Together with SCAF4, acts by suppressing the use of early, alternative poly(A) sites, thereby preventing the accumulation of non-functional truncated proteins. Mechanistically, associates with the phosphorylated C-terminal heptapeptide repeat domain (CTD) of the largest RNA polymerase II subunit (POLR2A), and subsequently binds nascent RNA upstream of early polyadenylation sites to prevent premature mRNA transcript cleavage and polyadenylation. Independently of SCAF4, also acts as a positive regulator of transcript elongation. This is SR-related and CTD-associated factor 8 from Rattus norvegicus (Rat).